We begin with the raw amino-acid sequence, 375 residues long: 23S rRNA (uracil(747)-C(5))-methyltransferase RlmC (375 aa).

[4Fe-4S] cluster contacts are provided by C3, C11, C14, and C87. S-adenosyl-L-methionine contacts are provided by Q212, F241, E262, and N307. C334 acts as the Nucleophile in catalysis.

The protein belongs to the class I-like SAM-binding methyltransferase superfamily. RNA M5U methyltransferase family. RlmC subfamily.

The enzyme catalyses uridine(747) in 23S rRNA + S-adenosyl-L-methionine = 5-methyluridine(747) in 23S rRNA + S-adenosyl-L-homocysteine + H(+). In terms of biological role, catalyzes the formation of 5-methyl-uridine at position 747 (m5U747) in 23S rRNA. The polypeptide is 23S rRNA (uracil(747)-C(5))-methyltransferase RlmC (Cronobacter sakazakii (strain ATCC BAA-894) (Enterobacter sakazakii)).